Here is a 750-residue protein sequence, read N- to C-terminus: von Willebrand factor A domain-containing protein DDB_G0292188 (750 aa).

The VWFA domain occupies 17–249 (EIKTVFNSDS…IKDDLLLDVV (233 aa)). Composition is skewed to low complexity over residues 586-595 (SINDNNNSFN) and 603-645 (PFFE…SSAS). Residues 586–657 (SINDNNNSFN…PPPSQMLNEQ (72 aa)) form a disordered region.

In Dictyostelium discoideum (Social amoeba), this protein is von Willebrand factor A domain-containing protein DDB_G0292188.